The primary structure comprises 560 residues: MNNNIINLIAAIILSLSIIFGWQYFVVKPEQKKQQQQIAVQKAENLKKQQLKALVEPATGIVVQEESQVQRIKIESESLTGSISLKGLRFDDLILKKYKQDLSKNSSEVRLFSPANTENAYFAEVGLVSNLSSVKLPNNDTIWNSDSEILSPEKPVHLFWVNEDGVKFLVTITVDENYLFTIEQTIVNNSDKELPVQSYGLINRKYIAVEKAVNILHQGPIGCIDENLKEYSYDDIKDKKSEKFAASKVDWIGITDKYWLSSLIPDKSSNYSSNFNYALKQGIERYQVDFISPVQIIKPGKNFSIKSRIFAGAKKVDLLDKYEKQYDIKLFDRAIDFGWFYIITKPVFYAMNFFYGYVGNFGVSILIVTVIIKLLMFTLANKSYRSMKKMKNLQPEIDRIKNLYSDDKARLNQEIMALYKKEKVNPVAGCLPILVQIPVFFSIYKVLYVTIEMRQAPFYGWIKDLSAPDPTTIFNLFGLLPFAPPSFLMIGAWPILMAITMFLQQKMSPEPADPMQAQVMKFMPLIFLFMFSSFPVGLLIYWSWNNILSIIQQYYINKFN.

A run of 6 helical transmembrane segments spans residues 5–25 (IINL…WQYF), 334–354 (AIDF…MNFF), 357–377 (YVGN…LLMF), 431–451 (LPIL…YVTI), 476–496 (LFGL…WPIL), and 522–542 (FMPL…LIYW).

Belongs to the OXA1/ALB3/YidC family. Type 1 subfamily. As to quaternary structure, interacts with the Sec translocase complex via SecD. Specifically interacts with transmembrane segments of nascent integral membrane proteins during membrane integration.

The protein resides in the cell inner membrane. Its function is as follows. Required for the insertion and/or proper folding and/or complex formation of integral membrane proteins into the membrane. Involved in integration of membrane proteins that insert both dependently and independently of the Sec translocase complex, as well as at least some lipoproteins. Aids folding of multispanning membrane proteins. This chain is Membrane protein insertase YidC, found in Rickettsia rickettsii (strain Iowa).